Reading from the N-terminus, the 399-residue chain is Acetate kinase 2 (399 aa).

A Mg(2+)-binding site is contributed by asparagine 10. Lysine 17 is a binding site for ATP. Arginine 89 is a substrate binding site. The active-site Proton donor/acceptor is the aspartate 146. Residues 206 to 210 (HLGNG), 281 to 283 (DCR), and 329 to 333 (GIGEN) each bind ATP. Mg(2+) is bound at residue glutamate 384.

Belongs to the acetokinase family. Homodimer. The cofactor is Mg(2+). Mn(2+) serves as cofactor.

It localises to the cytoplasm. It carries out the reaction acetate + ATP = acetyl phosphate + ADP. It participates in metabolic intermediate biosynthesis; acetyl-CoA biosynthesis; acetyl-CoA from acetate: step 1/2. Its function is as follows. Catalyzes the formation of acetyl phosphate from acetate and ATP. Can also catalyze the reverse reaction. The protein is Acetate kinase 2 of Neisseria meningitidis serogroup A / serotype 4A (strain DSM 15465 / Z2491).